A 379-amino-acid polypeptide reads, in one-letter code: Homoserine O-succinyltransferase (379 aa).

The 310-residue stretch at 48 to 357 (NAVLICHALS…SAHGHDAFLM (310 aa)) folds into the AB hydrolase-1 domain. The active-site Nucleophile is the Ser-154. Residue Arg-224 coordinates substrate. Catalysis depends on residues Asp-319 and His-352. Asp-353 provides a ligand contact to substrate.

The protein belongs to the AB hydrolase superfamily. MetX family. Homodimer.

The protein localises to the cytoplasm. It carries out the reaction L-homoserine + succinyl-CoA = O-succinyl-L-homoserine + CoA. Its pathway is amino-acid biosynthesis; L-methionine biosynthesis via de novo pathway; O-succinyl-L-homoserine from L-homoserine: step 1/1. In terms of biological role, transfers a succinyl group from succinyl-CoA to L-homoserine, forming succinyl-L-homoserine. The chain is Homoserine O-succinyltransferase from Neisseria gonorrhoeae (strain ATCC 700825 / FA 1090).